We begin with the raw amino-acid sequence, 608 residues long: V-type ATP synthase subunit I (608 aa).

The next 9 membrane-spanning stretches (helical) occupy residues Ile-308–Gly-325, Ala-327–Leu-346, Gly-356–Phe-376, Ile-405–Phe-425, Ile-438–Ile-458, Phe-464–Phe-484, Cys-495–Ala-515, Ile-517–Phe-537, and Ile-550–Leu-570.

The protein belongs to the V-ATPase 116 kDa subunit family.

It localises to the cell membrane. Functionally, produces ATP from ADP in the presence of a proton gradient across the membrane. This chain is V-type ATP synthase subunit I (atpI), found in Borreliella burgdorferi (strain ATCC 35210 / DSM 4680 / CIP 102532 / B31) (Borrelia burgdorferi).